We begin with the raw amino-acid sequence, 519 residues long: GATA zinc finger domain-containing protein 8 (519 aa).

4 disordered regions span residues 25 to 182 (YSTG…SSSG), 198 to 249 (SNIN…SNNT), 273 to 359 (SNNM…NNKQ), and 431 to 453 (DERQ…KRRE). Positions 37-156 (TNNSQNKTNN…SSSITSPSSN (120 aa)) are enriched in low complexity. The span at 172–182 (SPNNKQVSSSG) shows a compositional bias: polar residues. A compositionally biased stretch (low complexity) spans 273 to 357 (SNNMNINNQH…SNINNNNNNN (85 aa)). A coiled-coil region spans residues 429–461 (KTDERQQKKRMESDKNAEKREKRREASRLLNNV). The segment at 462 to 487 (CRNCKTTETPEWRKGPDGTKSLCNAC) adopts a GATA-type zinc-finger fold.

In Dictyostelium discoideum (Social amoeba), this protein is GATA zinc finger domain-containing protein 8 (gtaH).